A 332-amino-acid polypeptide reads, in one-letter code: 2-oxoglutarate-dependent dioxygenase FG08081 (332 aa).

Positions 176–280 (RSKSTLYFLH…RYSISYFLRA (105 aa)) constitute a Fe2OG dioxygenase domain. 3 residues coordinate Fe cation: histidine 201, aspartate 203, and histidine 258. Arginine 271 contacts 2-oxoglutarate.

The protein belongs to the iron/ascorbate-dependent oxidoreductase family. Requires Fe(2+) as cofactor.

It participates in mycotoxin biosynthesis. In terms of biological role, 2-oxoglutarate-dependent dioxygenase; part of the gene cluster that mediates the biosynthesis of butenolide, a mycotoxin that shows antibiotic activity but does not seem to play a major role in the spread of head blight in wheat. Butenolide is derived from glutamic acid via a 4-acetamido-2-butenoic acid intermediate. The predicted function of the NADH:flavin oxidoreductase FG08077, the cytochrome P450 monooxygenase FG08079, the decarboxylase FG08083, and the putative acetyltransferase FG08082 are consistent with this pathway, however, the respective activities of the butelonide biosynthesis cluster enzymes have still to be experimentally determined. In Gibberella zeae (strain ATCC MYA-4620 / CBS 123657 / FGSC 9075 / NRRL 31084 / PH-1) (Wheat head blight fungus), this protein is 2-oxoglutarate-dependent dioxygenase FG08081.